Reading from the N-terminus, the 585-residue chain is Zinc finger protein 732 (585 aa).

A KRAB domain is found at 4-75; the sequence is LTFRDVAIEF…KIHETVAKHP (72 aa). The segment at 141–163 adopts a C2H2-type 1; degenerate zinc-finger fold; that stretch reads FQCNVHVKVFSTFSNSNQRRIRH. The segment at 167 to 189 adopts a C2H2-type 2; degenerate zinc-finger fold; that stretch reads KHFKECGKSFQKFSDLTQHQGIH. The segment at 195-217 adopts a C2H2-type 3; degenerate zinc-finger fold; that stretch reads YTCEECGKDFKWYLIFNEYEIIH. The segment at 223-244 adopts a C2H2-type 4 zinc-finger fold; that stretch reads FTCEECGNIFTTSSNFAKHKVH. Residues 250-272 form a C2H2-type 5; degenerate zinc finger; the sequence is YKYEECGKAFNRSSTLTKHKRIH. 9 consecutive C2H2-type zinc fingers follow at residues 278-300, 306-328, 334-356, 362-384, 390-412, 418-440, 446-468, 474-496, and 502-524; these read FTCEECGKIITSSSNVAKHKKIH, YKCQECGKVFNRSTTLTKHNRIH, YTCEECGKAFSRSSVLNEHKRIH, YKCEQCGKAFRQSATLNKHKSIH, YTCEECGKAFSRFTTLNEHKRIH, HKCEECGKAFGWSTDLNKHKIIH, YKCEECGKAFGWSAYLSKHKKIH, YRCEECGKAFLCSRALNKHKTIH, and YECEECGKAFGWSTYLSKHKKIH. The C2H2-type 15; degenerate zinc finger occupies 530-552; sequence YRCEECGKAFRRSRVLNKYKTIH. Residues 558–580 form a C2H2-type 16; degenerate zinc finger; that stretch reads PKCKGCGKAFKWSSYLNQHNKIY.

It belongs to the krueppel C2H2-type zinc-finger protein family.

It localises to the nucleus. Its function is as follows. May be involved in transcriptional regulation. This is Zinc finger protein 732 (ZNF732) from Homo sapiens (Human).